An 860-amino-acid chain; its full sequence is uncharacterized protein (860 aa).

Composition is skewed to basic and acidic residues over residues 334-345 (LEKKSLQSDSKN) and 536-551 (EDQKVDSDKDGKLSDK). Disordered stretches follow at residues 334-360 (LEKKSLQSDSKNKKSQKRKKDEDLRKE), 530-551 (EEDDVSEDQKVDSDKDGKLSDK), 708-798 (ARKT…EDEF), and 813-842 (PFNETDDEEEIQTVDHSETHSHKKKKRKAI). 3 stretches are compositionally biased toward acidic residues: residues 716–725 (DEEGEIDEDE), 738–750 (EMDEEESDFDSEE), and 813–824 (PFNETDDEEEIQ). 2 positions are modified to phosphoserine: Ser744 and Ser748.

The protein belongs to the CBF/MAK21 family.

This is an uncharacterized protein from Schizosaccharomyces pombe (strain 972 / ATCC 24843) (Fission yeast).